The sequence spans 197 residues: Putative manganese efflux pump MntP 1 (197 aa).

The next 6 helical transmembrane spans lie at 8 to 28 (VILL…GLGA), 43 to 63 (VYAA…GYLL), 66 to 86 (VLLG…LILL), 123 to 143 (LAIA…LLAL), 146 to 166 (WLAC…GIYL), and 176 to 196 (DKAE…VMFI).

Belongs to the MntP (TC 9.B.29) family.

It is found in the cell inner membrane. In terms of biological role, probably functions as a manganese efflux pump. This is Putative manganese efflux pump MntP 1 from Psychrobacter cryohalolentis (strain ATCC BAA-1226 / DSM 17306 / VKM B-2378 / K5).